The sequence spans 130 residues: Small ribosomal subunit protein uS9 (130 aa).

It belongs to the universal ribosomal protein uS9 family.

The chain is Small ribosomal subunit protein uS9 from Aster yellows witches'-broom phytoplasma (strain AYWB).